The primary structure comprises 537 residues: CTP synthase (537 aa).

The interval 1 to 265 (MVHFIFVTGG…DNKVLKFFNI (265 aa)) is amidoligase domain. CTP is bound at residue S13. Residue S13 participates in UTP binding. ATP is bound by residues 14-19 (SLGKGL) and D71. Residues D71 and E139 each contribute to the Mg(2+) site. Residues 146–148 (DIE) and K222 each bind CTP. K222 lines the UTP pocket. Positions 290-536 (RIAIIAKYHK…IKAAIEYNKC (247 aa)) constitute a Glutamine amidotransferase type-1 domain. G352 contacts L-glutamine. C379 functions as the Nucleophile; for glutamine hydrolysis in the catalytic mechanism. Residues 380 to 383 (FGMQ), E403, and R464 contribute to the L-glutamine site. Residues H509 and E511 contribute to the active site.

The protein belongs to the CTP synthase family. As to quaternary structure, homotetramer.

It carries out the reaction UTP + L-glutamine + ATP + H2O = CTP + L-glutamate + ADP + phosphate + 2 H(+). The enzyme catalyses L-glutamine + H2O = L-glutamate + NH4(+). The catalysed reaction is UTP + NH4(+) + ATP = CTP + ADP + phosphate + 2 H(+). Its pathway is pyrimidine metabolism; CTP biosynthesis via de novo pathway; CTP from UDP: step 2/2. Allosterically activated by GTP, when glutamine is the substrate; GTP has no effect on the reaction when ammonia is the substrate. The allosteric effector GTP functions by stabilizing the protein conformation that binds the tetrahedral intermediate(s) formed during glutamine hydrolysis. Inhibited by the product CTP, via allosteric rather than competitive inhibition. Catalyzes the ATP-dependent amination of UTP to CTP with either L-glutamine or ammonia as the source of nitrogen. Regulates intracellular CTP levels through interactions with the four ribonucleotide triphosphates. This chain is CTP synthase, found in Rickettsia rickettsii (strain Iowa).